The primary structure comprises 236 residues: UPF0280 protein Mlab_0453 (236 aa).

Belongs to the UPF0280 family.

The protein is UPF0280 protein Mlab_0453 of Methanocorpusculum labreanum (strain ATCC 43576 / DSM 4855 / Z).